Reading from the N-terminus, the 539-residue chain is uncharacterized protein (539 aa).

The next 5 helical transmembrane spans lie at 4-22 (LVEN…GLLL), 27-46 (IFGF…ALST), 56-78 (LIYV…PGFF), 90-112 (ALTL…VLNI), and 155-177 (PVVA…IAIF). RCK C-terminal domains lie at 187–269 (KEAE…AIGE) and 271–352 (IDGD…LLGD). 4 helical membrane-spanning segments follow: residues 360-382 (FNLL…EFPL), 422-444 (LALR…GAGF), 453-475 (SLTI…LFVG), and 516-538 (YTSV…LFLL).

Belongs to the AAE transporter (TC 2.A.81) family.

The protein localises to the cell membrane. This is an uncharacterized protein from Corynebacterium glutamicum (strain ATCC 13032 / DSM 20300 / JCM 1318 / BCRC 11384 / CCUG 27702 / LMG 3730 / NBRC 12168 / NCIMB 10025 / NRRL B-2784 / 534).